Here is a 282-residue protein sequence, read N- to C-terminus: Pantothenate synthetase (282 aa).

30–37 (MGYLHEGH) contributes to the ATP binding site. Catalysis depends on histidine 37, which acts as the Proton donor. Glutamine 61 provides a ligand contact to (R)-pantoate. Glutamine 61 lines the beta-alanine pocket. 147–150 (GQKD) contributes to the ATP binding site. Residue glutamine 153 coordinates (R)-pantoate. Residues valine 176 and 184–187 (MSSR) contribute to the ATP site.

The protein belongs to the pantothenate synthetase family. Homodimer.

It localises to the cytoplasm. The enzyme catalyses (R)-pantoate + beta-alanine + ATP = (R)-pantothenate + AMP + diphosphate + H(+). It participates in cofactor biosynthesis; (R)-pantothenate biosynthesis; (R)-pantothenate from (R)-pantoate and beta-alanine: step 1/1. Catalyzes the condensation of pantoate with beta-alanine in an ATP-dependent reaction via a pantoyl-adenylate intermediate. The chain is Pantothenate synthetase from Caldicellulosiruptor bescii (strain ATCC BAA-1888 / DSM 6725 / KCTC 15123 / Z-1320) (Anaerocellum thermophilum).